The sequence spans 99 residues: Imizoquin biosynthesis cluster protein A (99 aa).

Its pathway is secondary metabolite biosynthesis. Part of the gene cluster that mediates the biosynthesis of imizoquins A to D, tripeptide-derived alkaloids that serve a protective role against oxidative stress that are essential for normal germination. ImqB is a canonical three-module NRPS that assembles the tripeptide backbone of the imizoquins via condensation of Trp, Tyr, and Leu-derived precursors. N-methylation by imqF and phenol oxidation by imqC, followed by cyclization via the FAD-dependent oxidase imqH carry out the three-step transformation of L-tyrosine into tetrahydroisoquinoline. Importantly, this sequence requires the presence of a free amine in the tyrosine moiety, indicating that isoquinoline formation occurs prior to peptide bond formation. The imidazolidin-4-one ring of imizoquins could form following additional oxidation of the methyl-derived bridgehead carbon by imqH. Lastly, O-methylation by imqG and leucine hydroxylation by imqE complete biosynthesis of the imizoquins. This is Imizoquin biosynthesis cluster protein A from Aspergillus flavus (strain ATCC 200026 / FGSC A1120 / IAM 13836 / NRRL 3357 / JCM 12722 / SRRC 167).